The sequence spans 602 residues: RNA-binding NOB1-like protein (602 aa).

The segment at 1–25 (MDPKPTSMWSSIVKKDPPSKPPVND) is disordered. The PINc domain maps to 48-134 (VVDANAIIEG…LKLIALSYTL (87 aa)). Disordered regions lie at residues 258–278 (SQGQ…VSRS) and 301–331 (IQKD…GEDI). Over residues 301-329 (IQKDQEADKARHTKEANETHAKDSGKNGE) the composition is skewed to basic and acidic residues. A coiled-coil region spans residues 331-365 (ISSILKDMRLEEESLRALQEETEETNAEATLINGE). The NOB1 zinc-finger motif lies at 452 to 522 (IRQLHRWILK…QYSIPMPKGG (71 aa)). Cys462, Cys465, Cys477, and Cys480 together coordinate Zn(2+).

It belongs to the NOB1 family. Component of the small ribosomal subunit, ribosomal RNA processing complex (SSU RRP complex). In terms of tissue distribution, highly expressed in flowers and siliques and at lower levels in roots, hypocotyls, stems, leaves and seeds.

It is found in the nucleus. The protein resides in the nucleoplasm. It localises to the cytoplasm. Functionally, essential protein required during embryogenesis and pollen development. Endonuclease cleaving pre-rRNA at the 3' end of the mature 18S rRNA (D-site); cleaves 20S pre-rRNA in the cytoplasm. Required for processing of 20S pre-rRNA precursor and biogenesis of 40S ribosomal subunits. The protein is RNA-binding NOB1-like protein of Arabidopsis thaliana (Mouse-ear cress).